Here is a 943-residue protein sequence, read N- to C-terminus: Protein translocase subunit SecA (943 aa).

Residues Gln-90, 108–112, and Asp-509 contribute to the ATP site; that span reads GEGKT. The tract at residues 535–560 is disordered; it reads PNNEHKPPIPKQRSSKSKGGFSSKVG. Residues 551-560 are compositionally biased toward low complexity; sequence SKGGFSSKVG.

This sequence belongs to the SecA family. Monomer and homodimer. Part of the essential Sec protein translocation apparatus which comprises SecA, SecYEG and auxiliary proteins SecDF. Other proteins may also be involved.

It is found in the cell inner membrane. It localises to the cellular thylakoid membrane. The protein resides in the cytoplasm. The enzyme catalyses ATP + H2O + cellular proteinSide 1 = ADP + phosphate + cellular proteinSide 2.. In terms of biological role, part of the Sec protein translocase complex. Interacts with the SecYEG preprotein conducting channel. Has a central role in coupling the hydrolysis of ATP to the transfer of proteins into and across the cell membrane, serving as an ATP-driven molecular motor driving the stepwise translocation of polypeptide chains across the membrane. Its function is as follows. Probably participates in protein translocation into and across both the cytoplasmic and thylakoid membranes in cyanobacterial cells. In Prochlorococcus marinus (strain MIT 9312), this protein is Protein translocase subunit SecA.